Consider the following 887-residue polypeptide: Valine--tRNA ligase (887 aa).

The short motif at 45-55 is the 'HIGH' region element; that stretch reads PNVTGILHMGH. The 'KMSKS' region signature appears at 528–532; the sequence is KMSKS. Position 531 (Lys-531) interacts with ATP. Positions 817-887 form a coiled coil; the sequence is TGLLNNEAEI…LKESLKSFEE (71 aa).

This sequence belongs to the class-I aminoacyl-tRNA synthetase family. ValS type 1 subfamily. In terms of assembly, monomer.

Its subcellular location is the cytoplasm. It carries out the reaction tRNA(Val) + L-valine + ATP = L-valyl-tRNA(Val) + AMP + diphosphate. In terms of biological role, catalyzes the attachment of valine to tRNA(Val). As ValRS can inadvertently accommodate and process structurally similar amino acids such as threonine, to avoid such errors, it has a 'posttransfer' editing activity that hydrolyzes mischarged Thr-tRNA(Val) in a tRNA-dependent manner. The protein is Valine--tRNA ligase of Fusobacterium nucleatum subsp. nucleatum (strain ATCC 25586 / DSM 15643 / BCRC 10681 / CIP 101130 / JCM 8532 / KCTC 2640 / LMG 13131 / VPI 4355).